The chain runs to 315 residues: Ribosomal protein L11 methyltransferase (315 aa).

Positions 162, 183, 205, and 248 each coordinate S-adenosyl-L-methionine.

It belongs to the methyltransferase superfamily. PrmA family.

It localises to the cytoplasm. It catalyses the reaction L-lysyl-[protein] + 3 S-adenosyl-L-methionine = N(6),N(6),N(6)-trimethyl-L-lysyl-[protein] + 3 S-adenosyl-L-homocysteine + 3 H(+). Functionally, methylates ribosomal protein L11. The protein is Ribosomal protein L11 methyltransferase of Oceanobacillus iheyensis (strain DSM 14371 / CIP 107618 / JCM 11309 / KCTC 3954 / HTE831).